The chain runs to 444 residues: Sensor protein CiaH (444 aa).

Transmembrane regions (helical) follow at residues 21–41 (FGVFTLIFSTMTLIILQVMHS) and 183–203 (LIVVVMASFWILSLLASLYLA). One can recognise a Histidine kinase domain in the interval 223–438 (NASHELRTPL…IFEVKIAIQT (216 aa)). Residue His-226 is modified to Phosphohistidine; by autocatalysis.

It localises to the cell membrane. It catalyses the reaction ATP + protein L-histidine = ADP + protein N-phospho-L-histidine.. In terms of biological role, member of the two-component regulatory system CiaH/CiaR. Involved in early steps of competence regulation and in penicillin susceptibility. Probably phosphorylates CiaR. The sequence is that of Sensor protein CiaH (ciaH) from Streptococcus pneumoniae serotype 4 (strain ATCC BAA-334 / TIGR4).